We begin with the raw amino-acid sequence, 447 residues long: Probable glycine dehydrogenase (decarboxylating) subunit 1 (447 aa).

This sequence belongs to the GcvP family. N-terminal subunit subfamily. The glycine cleavage system is composed of four proteins: P, T, L and H. In this organism, the P 'protein' is a heterodimer of two subunits.

It catalyses the reaction N(6)-[(R)-lipoyl]-L-lysyl-[glycine-cleavage complex H protein] + glycine + H(+) = N(6)-[(R)-S(8)-aminomethyldihydrolipoyl]-L-lysyl-[glycine-cleavage complex H protein] + CO2. Its function is as follows. The glycine cleavage system catalyzes the degradation of glycine. The P protein binds the alpha-amino group of glycine through its pyridoxal phosphate cofactor; CO(2) is released and the remaining methylamine moiety is then transferred to the lipoamide cofactor of the H protein. This chain is Probable glycine dehydrogenase (decarboxylating) subunit 1, found in Sulfolobus acidocaldarius (strain ATCC 33909 / DSM 639 / JCM 8929 / NBRC 15157 / NCIMB 11770).